Reading from the N-terminus, the 708-residue chain is Soluble guanylate cyclase gcy-37 (708 aa).

His-105 contacts heme. Residues Leu-368 to Glu-409 are a coiled coil. In terms of domain architecture, Guanylate cyclase spans Ser-434–Cys-562. Mg(2+) contacts are provided by Asp-439 and Asp-483.

This sequence belongs to the adenylyl cyclase class-4/guanylyl cyclase family. As to quaternary structure, heterodimer; with other soluble guanylate cyclases. Heme is required as a cofactor. In terms of tissue distribution, expressed in a small number of neurons, corresponding to URX, AQR and PQR neurons.

It is found in the cytoplasm. The catalysed reaction is GTP = 3',5'-cyclic GMP + diphosphate. Its activity is regulated as follows. May be regulated by molecular oxygen. Probably not activated by nitric oxide (NO). Its function is as follows. Synthesizes cyclic GMP (cGMP) from GTP. May play a role in sensory neurons. This chain is Soluble guanylate cyclase gcy-37 (gcy-37), found in Caenorhabditis elegans.